The sequence spans 51 residues: Cytochrome b559 subunit beta (51 aa).

The chain crosses the membrane as a helical span at residues 26 to 42; that stretch reads WLAVHALAVPTVFFIGS. Residue His30 coordinates heme.

This sequence belongs to the PsbE/PsbF family. Heterodimer of an alpha subunit and a beta subunit. PSII is composed of 1 copy each of membrane proteins PsbA, PsbB, PsbC, PsbD, PsbE, PsbF, PsbH, PsbI, PsbJ, PsbK, PsbL, PsbM, PsbT, PsbY, PsbZ, Psb30/Ycf12, at least 3 peripheral proteins of the oxygen-evolving complex and a large number of cofactors. It forms dimeric complexes. Requires heme b as cofactor.

Its subcellular location is the plastid. It is found in the chloroplast thylakoid membrane. Functionally, this b-type cytochrome is tightly associated with the reaction center of photosystem II (PSII). PSII is a light-driven water:plastoquinone oxidoreductase that uses light energy to abstract electrons from H(2)O, generating O(2) and a proton gradient subsequently used for ATP formation. It consists of a core antenna complex that captures photons, and an electron transfer chain that converts photonic excitation into a charge separation. In Bigelowiella natans (Pedinomonas minutissima), this protein is Cytochrome b559 subunit beta.